The sequence spans 1159 residues: ATP-dependent helicase/deoxyribonuclease subunit B (1159 aa).

Positions 1-275 (MEFNTYIGRA…TYFNTFYRYN (275 aa)) constitute a UvrD-like helicase ATP-binding domain. 8 to 15 (GRAGTGKS) contributes to the ATP binding site. One can recognise a UvrD-like helicase C-terminal domain in the interval 269 to 583 (NTFYRYNNDD…SIGTMDLAKV (315 aa)). [4Fe-4S] cluster contacts are provided by C784, C1112, C1115, and C1121.

It belongs to the helicase family. AddB/RexB type 1 subfamily. Heterodimer of AddA and AddB. It depends on Mg(2+) as a cofactor. Requires [4Fe-4S] cluster as cofactor.

Its function is as follows. The heterodimer acts as both an ATP-dependent DNA helicase and an ATP-dependent, dual-direction single-stranded exonuclease. Recognizes the chi site generating a DNA molecule suitable for the initiation of homologous recombination. The AddB subunit has 5' -&gt; 3' nuclease activity but not helicase activity. The polypeptide is ATP-dependent helicase/deoxyribonuclease subunit B (Staphylococcus epidermidis (strain ATCC 35984 / DSM 28319 / BCRC 17069 / CCUG 31568 / BM 3577 / RP62A)).